The chain runs to 397 residues: MAKVMRAIIVGGGIGGAATALSLARQGIKVMLLEKAHEIGEIGAGIQLGPNAFSALDSLGVGEVARQRAVFTDHITMMDAVNGEEVVHIETGQAFRDHFGGPYAVIHRVDIHATVWEAALTHPAVEYRTSTQVVDIRQTADDVTVFDDKGNSWTADILIGCDGGKSVVRQSLLGDSPRVTGHVVYRAVVDAADMPDDLRINAPVLWAGPHCHLVHYPLRGGKQYNLVVTFHSRQQEEWGVRDGSKEEVLSYFKGIHPRPRQMLDKPTSWRRWSTADREPVEKWGNDRITLVGDAAHPVAQYMAQGACMALEDAVTLGKALAQCDGDAARAFALYESVRIPRTARIVWSTREMGRVYHAAGVERQVRNLLWKGKTQSEFYRGIEWLYGWKEDNCLEAR.

Belongs to the 3-hydroxybenzoate 6-hydroxylase family. In terms of assembly, monomer. FAD serves as cofactor.

It carries out the reaction 3-hydroxybenzoate + NADH + O2 + H(+) = 2,5-dihydroxybenzoate + NAD(+) + H2O. Its activity is regulated as follows. Inhibited by copper, mercury and iron ions. Catalyzes the NAD- or NADP-dependent conversion of 3-hydroxybenzoate to gentisate. NAD and NADP function equally well. The sequence is that of 3-hydroxybenzoate 6-hydroxylase (mhbM) from Klebsiella oxytoca.